The primary structure comprises 232 residues: Large ribosomal subunit protein uL1 (232 aa).

Belongs to the universal ribosomal protein uL1 family. In terms of assembly, part of the 50S ribosomal subunit.

Binds directly to 23S rRNA. The L1 stalk is quite mobile in the ribosome, and is involved in E site tRNA release. Its function is as follows. Protein L1 is also a translational repressor protein, it controls the translation of the L11 operon by binding to its mRNA. The chain is Large ribosomal subunit protein uL1 from Stenotrophomonas maltophilia (strain R551-3).